We begin with the raw amino-acid sequence, 542 residues long: CTP synthase (542 aa).

The tract at residues 1–266 (MATNYIFVTG…DDFICQRFHL (266 aa)) is amidoligase domain. Position 14 (S14) interacts with CTP. A UTP-binding site is contributed by S14. Residues 15–20 (SLGKGI) and D72 contribute to the ATP site. 2 residues coordinate Mg(2+): D72 and E140. CTP contacts are provided by residues 147–149 (DIE), 187–192 (KTKPTQ), and K223. Residues 187 to 192 (KTKPTQ) and K223 contribute to the UTP site. 239-241 (KDV) provides a ligand contact to ATP. In terms of domain architecture, Glutamine amidotransferase type-1 spans 291 to 542 (VIGMVGKYTE…VKAAKDNQKK (252 aa)). Residue G352 coordinates L-glutamine. C379 functions as the Nucleophile; for glutamine hydrolysis in the catalytic mechanism. L-glutamine-binding positions include 380-383 (LGMQ), E403, and R470. Active-site residues include H515 and E517.

Belongs to the CTP synthase family. As to quaternary structure, homotetramer.

It carries out the reaction UTP + L-glutamine + ATP + H2O = CTP + L-glutamate + ADP + phosphate + 2 H(+). The catalysed reaction is L-glutamine + H2O = L-glutamate + NH4(+). It catalyses the reaction UTP + NH4(+) + ATP = CTP + ADP + phosphate + 2 H(+). It participates in pyrimidine metabolism; CTP biosynthesis via de novo pathway; CTP from UDP: step 2/2. With respect to regulation, allosterically activated by GTP, when glutamine is the substrate; GTP has no effect on the reaction when ammonia is the substrate. The allosteric effector GTP functions by stabilizing the protein conformation that binds the tetrahedral intermediate(s) formed during glutamine hydrolysis. Inhibited by the product CTP, via allosteric rather than competitive inhibition. Its function is as follows. Catalyzes the ATP-dependent amination of UTP to CTP with either L-glutamine or ammonia as the source of nitrogen. Regulates intracellular CTP levels through interactions with the four ribonucleotide triphosphates. In Pasteurella multocida (strain Pm70), this protein is CTP synthase.